Consider the following 332-residue polypeptide: Fructose-bisphosphate aldolase (332 aa).

Ser56 lines the D-glyceraldehyde 3-phosphate pocket. The Proton donor role is filled by Asp93. Zn(2+) is bound by residues His94, Asp115, Glu147, and His191. A dihydroxyacetone phosphate-binding site is contributed by Gly192. His234 is a Zn(2+) binding site. Dihydroxyacetone phosphate-binding positions include 235–237 (GAS) and 277–280 (NIDS).

The protein belongs to the class II fructose-bisphosphate aldolase family. As to quaternary structure, homodimer. Zn(2+) is required as a cofactor.

The enzyme catalyses beta-D-fructose 1,6-bisphosphate = D-glyceraldehyde 3-phosphate + dihydroxyacetone phosphate. The protein operates within carbohydrate degradation; glycolysis; D-glyceraldehyde 3-phosphate and glycerone phosphate from D-glucose: step 4/4. Functionally, catalyzes the aldol condensation of dihydroxyacetone phosphate (DHAP or glycerone-phosphate) with glyceraldehyde 3-phosphate (G3P) to form fructose 1,6-bisphosphate (FBP) in gluconeogenesis and the reverse reaction in glycolysis. The sequence is that of Fructose-bisphosphate aldolase (fba) from Treponema pallidum (strain Nichols).